We begin with the raw amino-acid sequence, 171 residues long: Mitoferrin-1 (171 aa).

A disordered region spans residues 1 to 40 (MELRRGGVGSQARARRMDGDSRDGGGGCKDAGSEDYENLP). The stretch at 43–131 (ASLSTHMTAG…FACYENMKRT (89 aa)) is one Solcar repeat. The next 3 helical transmembrane spans lie at 45-64 (LSTH…SVMY), 105-125 (RGLN…FACY), and 143-163 (HLAN…PSTD).

Belongs to the mitochondrial carrier (TC 2.A.29) family. In terms of assembly, interacts with ACB10; this interaction stabilizes SLC25A37 and enhances the function of SLC25A37 to import mitochondrial iron during erythroid differentiation.

The protein resides in the mitochondrion inner membrane. It catalyses the reaction Fe(2+)(in) = Fe(2+)(out). In terms of biological role, mitochondrial iron transporter that specifically mediates iron uptake in developing erythroid cells, thereby playing an essential role in heme biosynthesis. The polypeptide is Mitoferrin-1 (SLC25A37) (Bos taurus (Bovine)).